An 845-amino-acid chain; its full sequence is Protein arginine N-methyltransferase 9 (845 aa).

3 TPR repeats span residues 25 to 58 (VSRSLQSAEHCLGVQDFGTAYAHYLLVLSLAPEL), 67 to 100 (QYTLFRWAEELDALSRIQDLLGCYEQALELFPDD), and 101 to 134 (EVICNSMGEHLFRMGFRDEAAGYFHKAVKLNPDF). 2 consecutive SAM-dependent MTase PRMT-type domains span residues 137–466 (AKEN…YLRI) and 530–845 (NIPY…TVKQ).

Belongs to the class I-like SAM-binding methyltransferase superfamily. Protein arginine N-methyltransferase family. Found in a complex with PRMT9, SF3B2 and SF3B4. Interacts with SF3B2.

The protein localises to the cytoplasm. The catalysed reaction is L-arginyl-[protein] + 2 S-adenosyl-L-methionine = N(omega),N(omega)'-dimethyl-L-arginyl-[protein] + 2 S-adenosyl-L-homocysteine + 2 H(+). Arginine methyltransferase that can both catalyze the formation of omega-N monomethylarginine (MMA) and symmetrical dimethylarginine (sDMA). Specifically mediates the symmetrical dimethylation of SF3B2. Involved in the regulation of alternative splicing of pre-mRNA. The sequence is that of Protein arginine N-methyltransferase 9 from Homo sapiens (Human).